Consider the following 329-residue polypeptide: Malate dehydrogenase (329 aa).

Residue 12-18 (GAAGQIG) participates in NAD(+) binding. Substrate-binding residues include Arg-95 and Arg-101. Residues Asn-108, Gln-115, and 132-134 (VGN) contribute to the NAD(+) site. Asn-134 and Arg-165 together coordinate substrate. His-190 functions as the Proton acceptor in the catalytic mechanism.

It belongs to the LDH/MDH superfamily. MDH type 2 family.

The enzyme catalyses (S)-malate + NAD(+) = oxaloacetate + NADH + H(+). In terms of biological role, catalyzes the reversible oxidation of malate to oxaloacetate. The polypeptide is Malate dehydrogenase (Bordetella bronchiseptica (strain ATCC BAA-588 / NCTC 13252 / RB50) (Alcaligenes bronchisepticus)).